Here is a 520-residue protein sequence, read N- to C-terminus: Cell adhesion molecule CEACAM2 (520 aa).

Positions 1-34 (MELASAHLHKGQVPWFGLLLTASLLASWSPPTTA) are cleaved as a signal peptide. One can recognise an Ig-like V-type domain in the interval 35–141 (QVTVMAFPLH…RVLTGQFHVH (107 aa)). Residues 35 to 422 (QVTVMAFPLH…IFDSTYDISD (388 aa)) are Extracellular-facing. Asparagine 87, asparagine 104, asparagine 148, asparagine 152, asparagine 175, asparagine 199, asparagine 206, asparagine 210, asparagine 226, asparagine 258, asparagine 290, asparagine 294, asparagine 304, asparagine 317, asparagine 333, and asparagine 361 each carry an N-linked (GlcNAc...) asparagine glycan. 3 Ig-like C2-type domains span residues 145-234 (LKSN…FSLN), 239-319 (PDTP…KNIT), and 327-411 (PSLQ…IKLE). A disulfide bridge links cysteine 167 with cysteine 217. A disulfide bridge connects residues cysteine 261 and cysteine 301. A disulfide bridge links cysteine 346 with cysteine 394. The helical transmembrane segment at 423–443 (VPIAVIITGAVAGVILIAGLA) threads the bilayer. The Cytoplasmic segment spans residues 444–520 (YRLCSRKSRW…ETVYSEVKKK (77 aa)). Positions 457–520 (QRDLTEHKPS…ETVYSEVKKK (64 aa)) are disordered. Residues 466–480 (SASNHNLAPSDNSPN) are compositionally biased toward polar residues. A Phosphotyrosine modification is found at tyrosine 487. The span at 490 to 513 (LNFNSQQPNRPTSAPSSPRATETV) shows a compositional bias: polar residues. Serine 502 carries the phosphoserine modification. Tyrosine 514 carries the post-translational modification Phosphotyrosine.

It belongs to the immunoglobulin superfamily. CEA family. In terms of assembly, interacts weakly with MHV spike protein in tissue culture. In terms of tissue distribution, isoform 2 is detected in elongating spermatids within the seminiferous epithelium (at protein level). Expressed in kidney, colon, uterus, gut mononuclear cells, crypt epithelia of intestinal tissues, and to a lesser extent, in spleen. Expressed in brain including VMH, globus pallidus, ventral pallidum, striatum, olfactory bulb and hippocampus. Also detected in rectal carcinoma cell line CMT93. Isoform 2 and isoform 3 are expressed in testis. Isoform 2 is detected in seminiferous tubule, not detected in epididymal spermatozoa. Also not observed on spermatogonia, spermatocytes, round spermatids or somatic Sertoli cells. During stages I-VII of spermatogenesis, detected on the elongating spermatids. At spermiation (stage VIII) and subsequent stages IX-XII, levels are drastically reduced or absent in the seminiferous tubules. Sometimes weakly detected in the apical region of stage-VIII seminiferous epithelium. Isoform 2 level is very low in stomach, kidney, intestine, liver and spleen.

Its subcellular location is the cell membrane. Controls energy balance and peripheral insulin action. Involved in the regulation of feeding behavior particularly in the ventromedial nucleus of hypothalamus (VMH) regulation of food intake. Has a role in the regulation of metabolic rate and insulin sensitivity or resistance via effects on brown adipogenesis, sympathetic nervous outflow to brown adipose tissue, spontaneous activity and energy expenditure in skeletal muscle. In case of murine coronavirus (MHV) infection, does probably not serve as functional receptor for the virus. In terms of biological role, isoform 2 may be an adhesion molecule contributing to cell to cell adhesion between elongating spermatids and Sertoli cells within the seminiferous epithelium. The polypeptide is Cell adhesion molecule CEACAM2 (Mus musculus (Mouse)).